Consider the following 161-residue polypeptide: Suppressor of kinetochore protein 1 (161 aa).

The interaction with the F-box domain of F-box proteins stretch occupies residues 102–161 (VLASNYLDIKPLLDTGCKTVANMIRGKSPEDIRKTFNIPNDFTPEEEEQIRKENEWAEDR).

The protein belongs to the SKP1 family. In terms of assembly, essential component of the E3 ubiquitin ligase Skp1-Cullin-1-F-box (SCF) complex. Interacts with cul1, fbh1, mcs2, pip1, pof1, pof2, pof3, pof4, pof5, pof6, pof7, pof8, pof9, pof10, pof11, pof12, pof13, pof14, pop1, pop2 and tfb3. Forms a complex with pof6 and sip1. Component of the RAVE complex composed of rav1, rav2 and skp1.

It localises to the cytoplasm. The protein localises to the nucleus. Functionally, required for cig2 degradation in the G2 and M phases of the cell cycle. Together with pof6, essential for septum processing and cell separation. Involved in mitotic progression, essential for the execution of anaphase B; required for coordinated structural alterations of mitotic spindles and segregation of nuclear membrane structures at anaphase. Involved in the DNA damage checkpoint pathway and maintenance of genome integrity. Component of the RAVE complex which is required for stable assembly of the vacuolar ATPase complex V-ATPase. This Schizosaccharomyces pombe (strain 972 / ATCC 24843) (Fission yeast) protein is Suppressor of kinetochore protein 1.